The sequence spans 293 residues: Mitochondrial glycine transporter (293 aa).

Solcar repeat units lie at residues 6–85 (GGVP…SRSA), 102–186 (LQSY…AKEM), and 208–291 (ASAM…LLKL). Helical transmembrane passes span 12–37 (LVSG…TRLQ), 60–86 (GTLP…RSAL), 108–133 (LLTG…VRYE), 161–184 (GAAA…EQAK), 212–238 (VNGV…KTRM), and 266–284 (GLSL…AWGI).

It belongs to the mitochondrial carrier (TC 2.A.29) family. SLC25A38 subfamily.

Its subcellular location is the mitochondrion inner membrane. The catalysed reaction is glycine(in) = glycine(out). Mitochondrial glycine transporter that imports glycine into the mitochondrial matrix. Plays an important role in providing glycine for the first enzymatic step in heme biosynthesis, the condensation of glycine with succinyl-CoA to produce 5-aminolevulinate (ALA) in the mitochondrial matrix. This chain is Mitochondrial glycine transporter, found in Eremothecium gossypii (strain ATCC 10895 / CBS 109.51 / FGSC 9923 / NRRL Y-1056) (Yeast).